The following is a 217-amino-acid chain: Uracil-DNA glycosylase (217 aa).

Residue Asp-62 is the Proton acceptor of the active site.

The protein belongs to the uracil-DNA glycosylase (UDG) superfamily. UNG family.

Its subcellular location is the cytoplasm. It catalyses the reaction Hydrolyzes single-stranded DNA or mismatched double-stranded DNA and polynucleotides, releasing free uracil.. Excises uracil residues from the DNA which can arise as a result of misincorporation of dUMP residues by DNA polymerase or due to deamination of cytosine. The polypeptide is Uracil-DNA glycosylase (Streptococcus pyogenes serotype M3 (strain ATCC BAA-595 / MGAS315)).